We begin with the raw amino-acid sequence, 1193 residues long: Nucleolar protein 6 (1193 aa).

Disordered stretches follow at residues 1–69 (MRFV…TKNV) and 1137–1193 (KREQ…KVLK). Basic and acidic residues-rich tracts occupy residues 31–46 (AGDHSDLDEPKPKIAK) and 1151–1161 (DANKAEEESKP). Residue Ser35 is modified to Phosphoserine. Residues 1162-1184 (KPKKHRQRKGTGKKALPKRKRLI) are compositionally biased toward basic residues.

It belongs to the NRAP family. Part of the small subunit (SSU) processome, composed of more than 70 proteins and the RNA chaperone small nucleolar RNA (snoRNA) U3. Expressed in nurse cells at stages 9-10 of oogenesis and exported to the oocyte.

It is found in the nucleus. It localises to the nucleolus. The protein localises to the chromosome. In terms of biological role, part of the small subunit (SSU) processome, first precursor of the small eukaryotic ribosomal subunit. During the assembly of the SSU processome in the nucleolus, many ribosome biogenesis factors, an RNA chaperone and ribosomal proteins associate with the nascent pre-rRNA and work in concert to generate RNA folding, modifications, rearrangements and cleavage as well as targeted degradation of pre-ribosomal RNA by the RNA exosome. This Drosophila melanogaster (Fruit fly) protein is Nucleolar protein 6.